Reading from the N-terminus, the 463-residue chain is Probable ECA polymerase (463 aa).

The next 11 membrane-spanning stretches (helical) occupy residues Phe-6 to Met-26, Phe-39 to Phe-59, Val-65 to Tyr-85, Ala-112 to Leu-132, Gly-154 to Leu-174, Ala-180 to Gly-200, Gly-201 to Gly-221, Trp-222 to Leu-242, Leu-340 to Ile-360, Tyr-377 to Thr-397, and Val-408 to Leu-428.

Belongs to the WzyE family. As to quaternary structure, probably part of a complex composed of WzxE, WzyE and WzzE.

It localises to the cell inner membrane. The protein operates within bacterial outer membrane biogenesis; enterobacterial common antigen biosynthesis. Functionally, probably involved in the polymerization of enterobacterial common antigen (ECA) trisaccharide repeat units. The polypeptide is Probable ECA polymerase (Pectobacterium carotovorum subsp. carotovorum (strain PC1)).